The chain runs to 889 residues: Alanine--tRNA ligase (889 aa).

Zn(2+) contacts are provided by His-564, His-568, Cys-677, and His-681.

It belongs to the class-II aminoacyl-tRNA synthetase family. The cofactor is Zn(2+).

The protein localises to the cytoplasm. The catalysed reaction is tRNA(Ala) + L-alanine + ATP = L-alanyl-tRNA(Ala) + AMP + diphosphate. Functionally, catalyzes the attachment of alanine to tRNA(Ala) in a two-step reaction: alanine is first activated by ATP to form Ala-AMP and then transferred to the acceptor end of tRNA(Ala). Also edits incorrectly charged Ser-tRNA(Ala) and Gly-tRNA(Ala) via its editing domain. The sequence is that of Alanine--tRNA ligase from Rhodopseudomonas palustris (strain ATCC BAA-98 / CGA009).